The sequence spans 1445 residues: DNA-directed RNA polymerase subunit beta'' (1445 aa).

The Zn(2+) site is built by cysteine 220, cysteine 293, cysteine 300, and cysteine 303.

This sequence belongs to the RNA polymerase beta' chain family. RpoC2 subfamily. In terms of assembly, in plastids the minimal PEP RNA polymerase catalytic core is composed of four subunits: alpha, beta, beta', and beta''. When a (nuclear-encoded) sigma factor is associated with the core the holoenzyme is formed, which can initiate transcription. Requires Zn(2+) as cofactor.

Its subcellular location is the plastid. It is found in the chloroplast. The enzyme catalyses RNA(n) + a ribonucleoside 5'-triphosphate = RNA(n+1) + diphosphate. Its function is as follows. DNA-dependent RNA polymerase catalyzes the transcription of DNA into RNA using the four ribonucleoside triphosphates as substrates. The protein is DNA-directed RNA polymerase subunit beta'' of Anthoceros angustus (Hornwort).